Consider the following 118-residue polypeptide: Large ribosomal subunit protein bL20 (118 aa).

The protein belongs to the bacterial ribosomal protein bL20 family.

Its function is as follows. Binds directly to 23S ribosomal RNA and is necessary for the in vitro assembly process of the 50S ribosomal subunit. It is not involved in the protein synthesizing functions of that subunit. The polypeptide is Large ribosomal subunit protein bL20 (Buchnera aphidicola subsp. Acyrthosiphon pisum (strain 5A)).